We begin with the raw amino-acid sequence, 356 residues long: MSELKNMLDFTKEELENLVQPKFRAKQIFEWVYKKYADDFLQMSSLPKDFRVYLQKNFHFSPLKCVKDEKSKDGSIKYLFELLDGKKIEAVLLPMKEELVDENGKIIKHARYTICVSSQVGCKSGCSFCLTAKGGLSRNLSAGEIVGQILWIKKHNKIPYERRVNIVYMGMGEPLDNLKNVSKAVKILADNDALAISPRRQTISTSGLAKQIKELGEMNLGVLLAISLHAVNDELRSELMPINKAYNIASIMEAVRNFPIDQRKRVMFEYLLIDGINDKIEHAKELVKLLNGIKAKVNLILFNPHEGSLYNRPSVENAIKFQDYLSAKGVTCTIRESKGLDISAACGQLKERQSKQ.

Residue glutamate 89 is the Proton acceptor of the active site. One can recognise a Radical SAM core domain in the interval 108–341 (KHARYTICVS…CTIRESKGLD (234 aa)). Cysteines 115 and 346 form a disulfide. [4Fe-4S] cluster is bound by residues cysteine 122, cysteine 126, and cysteine 129. S-adenosyl-L-methionine contacts are provided by residues 172 to 173 (GE), serine 204, 227 to 229 (SLH), and asparagine 303. Cysteine 346 acts as the S-methylcysteine intermediate in catalysis.

It belongs to the radical SAM superfamily. RlmN family. It depends on [4Fe-4S] cluster as a cofactor.

The protein resides in the cytoplasm. It carries out the reaction adenosine(2503) in 23S rRNA + 2 reduced [2Fe-2S]-[ferredoxin] + 2 S-adenosyl-L-methionine = 2-methyladenosine(2503) in 23S rRNA + 5'-deoxyadenosine + L-methionine + 2 oxidized [2Fe-2S]-[ferredoxin] + S-adenosyl-L-homocysteine. The enzyme catalyses adenosine(37) in tRNA + 2 reduced [2Fe-2S]-[ferredoxin] + 2 S-adenosyl-L-methionine = 2-methyladenosine(37) in tRNA + 5'-deoxyadenosine + L-methionine + 2 oxidized [2Fe-2S]-[ferredoxin] + S-adenosyl-L-homocysteine. Functionally, specifically methylates position 2 of adenine 2503 in 23S rRNA and position 2 of adenine 37 in tRNAs. m2A2503 modification seems to play a crucial role in the proofreading step occurring at the peptidyl transferase center and thus would serve to optimize ribosomal fidelity. The chain is Dual-specificity RNA methyltransferase RlmN from Campylobacter lari (strain RM2100 / D67 / ATCC BAA-1060).